The sequence spans 338 residues: UbiA prenyltransferase domain-containing protein 1 (338 aa).

An N-acetylalanine modification is found at Ala-2. The next 8 membrane-spanning stretches (helical) occupy residues 83–103 (LLVG…LVNT), 134–154 (FGVF…YLSP), 160–180 (LALI…GIGF), 188–208 (LIIL…IQVG), 209–229 (SLAI…EAIL), 245–267 (IVTL…LLFL), 277–297 (THCT…FSLE), and 315–335 (LNLL…AGSL).

It belongs to the UbiA prenyltransferase family. In terms of assembly, interacts with HMGCR and SOAT1. As to expression, ubiquitously expressed.

The protein localises to the endoplasmic reticulum membrane. It is found in the golgi apparatus membrane. The protein resides in the mitochondrion membrane. Its subcellular location is the cytoplasm. It localises to the nucleus. The enzyme catalyses menadiol + (2E,6E,10E)-geranylgeranyl diphosphate = menaquinol-4 + diphosphate. It carries out the reaction all-trans-decaprenyl diphosphate + 4-hydroxybenzoate = 4-hydroxy-3-(all-trans-decaprenyl)benzoate + diphosphate. It participates in quinol/quinone metabolism; menaquinone biosynthesis. Its pathway is cofactor biosynthesis; ubiquinone biosynthesis. In terms of biological role, prenyltransferase that mediates the formation of menaquinone-4 (MK-4) and coenzyme Q10. MK-4 is a vitamin K2 isoform present at high concentrations in the brain, kidney and pancreas, and is required for endothelial cell development. Mediates the conversion of phylloquinone (PK) into MK-4, probably by cleaving the side chain of phylloquinone (PK) to release 2-methyl-1,4-naphthoquinone (menadione; K3) and then prenylating it with geranylgeranyl pyrophosphate (GGPP) to form MK-4. Also plays a role in cardiovascular development independently of MK-4 biosynthesis, by acting as a coenzyme Q10 biosynthetic enzyme: coenzyme Q10, also named ubiquinone, plays an important antioxidant role in the cardiovascular system. Mediates biosynthesis of coenzyme Q10 in the Golgi membrane, leading to protect cardiovascular tissues from NOS3/eNOS-dependent oxidative stress. The sequence is that of UbiA prenyltransferase domain-containing protein 1 from Homo sapiens (Human).